A 202-amino-acid polypeptide reads, in one-letter code: UMP-CMP kinase 3 (202 aa).

An ATP-binding site is contributed by 24–29 (GSGKGT). The interval 44–73 (SAGDLLRAEIKSGSENGTMIQNMIKEGKIV) is NMP. Residues arginine 50, 71 to 73 (KIV), and 98 to 101 (GFPR) each bind a ribonucleoside 5'-phosphate. Asparagine 105 contacts CMP. Positions 136 to 144 (GRNQGREDD) are LID. Residue arginine 137 coordinates ATP. Residues arginine 141 and arginine 152 each coordinate a ribonucleoside 5'-phosphate. Lysine 180 lines the ATP pocket.

In terms of assembly, monomer. The cofactor is Mg(2+).

It is found in the cytoplasm. It localises to the nucleus. The catalysed reaction is CMP + ATP = CDP + ADP. The enzyme catalyses dCMP + ATP = dCDP + ADP. It catalyses the reaction UMP + ATP = UDP + ADP. In terms of biological role, catalyzes the phosphorylation of pyrimidine nucleoside monophosphates at the expense of ATP. Plays an important role in de novo pyrimidine nucleotide biosynthesis. Has preference for UMP and CMP as phosphate acceptors. Does not act on dCMP and dUMP. The protein is UMP-CMP kinase 3 (UMK3) of Arabidopsis thaliana (Mouse-ear cress).